Here is a 78-residue protein sequence, read N- to C-terminus: MNSVGEECTDMKREYDQCFNRWFAEKFLKGECSGDPCTELFRRYRDCVQKAIKDKDIPVDGVDFMGPSKSKTESDGSS.

Positions 1–52 form a coiled coil; the sequence is MNSVGEECTDMKREYDQCFNRWFAEKFLKGECSGDPCTELFRRYRDCVQKAI. The 51-residue stretch at 5-55 folds into the CHCH domain; sequence GEECTDMKREYDQCFNRWFAEKFLKGECSGDPCTELFRRYRDCVQKAIKDK. 2 consecutive short sequence motifs (cx9C motif) follow at residues 8–18 and 37–47; these read CTDMKREYDQC and CTELFRRYRDC. 2 cysteine pairs are disulfide-bonded: Cys-8–Cys-47 and Cys-18–Cys-37.

This sequence belongs to the TRIAP1/MDM35 family. As to quaternary structure, monomer. Forms a complex with prelid1 in the mitochondrion intermembrane space. Interacts with prelid3a. Expressed in the developing pronephros.

It localises to the mitochondrion. Its subcellular location is the mitochondrion intermembrane space. The catalysed reaction is a 1,2-diacyl-sn-glycero-3-phosphate(in) = a 1,2-diacyl-sn-glycero-3-phosphate(out). Involved in the modulation of the mitochondrial apoptotic pathway by ensuring the accumulation of cardiolipin (CL) in mitochondrial membranes. The triap1:prelid1 complex probably functions as a phosphatidic acid (PA) transporter across the mitochondrion intermembrane space to provide PA for cardiolipin CL synthesis in the inner membrane. Likewise, the triap1:prelid3a complex mediates the transfer of phosphatidic acid (PA) between liposomes (in vitro) and probably functions as a PA transporter across the mitochondrion intermembrane space (in vivo). Mediates cell survival by inhibiting activation of caspase-9 which prevents induction of apoptosis. Required for pronephros development; probably involved at an early stage in the formation of pronephric components derived from the somatic layer. This is TP53-regulated inhibitor of apoptosis 1 from Xenopus tropicalis (Western clawed frog).